We begin with the raw amino-acid sequence, 213 residues long: Transcription antitermination protein NusB (213 aa).

The protein belongs to the NusB family.

In terms of biological role, involved in transcription antitermination. Required for transcription of ribosomal RNA (rRNA) genes. Binds specifically to the boxA antiterminator sequence of the ribosomal RNA (rrn) operons. The polypeptide is Transcription antitermination protein NusB (Picosynechococcus sp. (strain ATCC 27264 / PCC 7002 / PR-6) (Agmenellum quadruplicatum)).